The following is a 310-amino-acid chain: Protease HtpX homolog (310 aa).

2 helical membrane-spanning segments follow: residues 16 to 36 (NAVL…VDVI) and 55 to 75 (IFPT…VVCI). Zn(2+) is bound at residue H166. E167 is a catalytic residue. H170 is a binding site for Zn(2+). 2 consecutive transmembrane segments (helical) span residues 182–202 (VGIL…FFMG) and 214–234 (MILL…QMYL). A Zn(2+)-binding site is contributed by E239.

This sequence belongs to the peptidase M48B family. Zn(2+) is required as a cofactor.

It localises to the cell inner membrane. The sequence is that of Protease HtpX homolog from Helicobacter pylori (strain Shi470).